The sequence spans 210 residues: MTNLNYQQTHFVMSAPDIRHLPSDTGIEVAFAGRSNAGKSSALNTLTNQKSLARTSKTPGRTQLINLFEVADGKRLVDLPGYGYAEVPEEMKRKWQRALGEYLEKRHSLQGLVVLMDIRHPLKDLDQQMIEWAVDSNIAVLVLLTKADKLASGARKAQLNMVREAVLAFNGDVQVETFSSLKKQGVDKLRQKLDTWFSEMQPVEETQDGE.

An EngB-type G domain is found at 25 to 199; sequence TGIEVAFAGR…RQKLDTWFSE (175 aa). Residues 33–40, 60–64, 78–81, 145–148, and 178–180 contribute to the GTP site; these read GRSNAGKS, GRTQL, DLPG, TKAD, and FSS. 2 residues coordinate Mg(2+): serine 40 and threonine 62.

The protein belongs to the TRAFAC class TrmE-Era-EngA-EngB-Septin-like GTPase superfamily. EngB GTPase family. Requires Mg(2+) as cofactor.

Functionally, necessary for normal cell division and for the maintenance of normal septation. The protein is Probable GTP-binding protein EngB of Shigella boydii serotype 4 (strain Sb227).